Consider the following 258-residue polypeptide: Mediator of RNA polymerase II transcription subunit 4 (258 aa).

A coiled-coil region spans residues 52–101 (FRKMLELAEEQAKVEEAMDQLRAKVEVHDREIQKLQKSLKDAELILSTAI). 2 disordered regions span residues 164-208 (GKSE…EVPN) and 234-258 (LETR…SDSQ). Polar residues predominate over residues 166–190 (SEQNINGGTVTHQNSGMPSEQQRTL). Gly residues predominate over residues 194–204 (AGSGSGSGAGG). Over residues 246 to 258 (STDSSSSSSSDSQ) the composition is skewed to low complexity.

It belongs to the Mediator complex subunit 4 family. In terms of assembly, component of the Mediator complex, which includes at least MED4, MED6, MED14, MED17, MED18, MED20, MED21, MED23, MED24, MED27, MED30 and MED31. Interacts with MED10 and MED21.

The protein resides in the nucleus. Component of the Mediator complex, a coactivator involved in the regulated transcription of nearly all RNA polymerase II-dependent genes. Mediator functions as a bridge to convey information from gene-specific regulatory proteins to the basal RNA polymerase II transcription machinery. Mediator is recruited to promoters by direct interactions with regulatory proteins and serves as a scaffold for the assembly of a functional preinitiation complex with RNA polymerase II and the general transcription factors. Required for activated transcription of the MtnA, MtnB and MtnD genes. This chain is Mediator of RNA polymerase II transcription subunit 4 (MED4), found in Drosophila melanogaster (Fruit fly).